A 410-amino-acid chain; its full sequence is Class E basic helix-loop-helix protein 41 (410 aa).

Residue Lys31 forms a Glycyl lysine isopeptide (Lys-Gly) (interchain with G-Cter in SUMO2) linkage. The bHLH domain occupies 44–99 (TYKLPHRLIEKKRRDRINECIAQLKDLLPEHLKLTTLGHLEKAVVLELTLKHLKAL). Lys121 is covalently cross-linked (Glycyl lysine isopeptide (Lys-Gly) (interchain with G-Cter in SUMO2)). In terms of domain architecture, Orange spans 131–166 (FHSGFQTCAKEVLQYLARFESWTPREPRCAQLVSHL). Disordered stretches follow at residues 209 to 255 (IQRT…KRPK) and 360 to 410 (GATA…KDAP). Lys240 is covalently cross-linked (Glycyl lysine isopeptide (Lys-Gly) (interchain with G-Cter in SUMO2)).

Homodimer. Heterodimer with BHLHE40/DEC1. Interacts with CIART. Interacts with BMAL1. Interacts with RXRA. Interacts with NR0B2 and HNF1A. As to expression, expressed in skeletal muscle, brain and lung.

The protein resides in the nucleus. Functionally, transcriptional repressor involved in the regulation of the circadian rhythm by negatively regulating the activity of the clock genes and clock-controlled genes. Acts as the negative limb of a novel autoregulatory feedback loop (DEC loop) which differs from the one formed by the PER and CRY transcriptional repressors (PER/CRY loop). Both these loops are interlocked as it represses the expression of PER1 and in turn is repressed by PER1/2 and CRY1/2. Represses the activity of the circadian transcriptional activator: CLOCK-BMAL1 heterodimer by competing for the binding to E-box elements (5'-CACGTG-3') found within the promoters of its target genes. Negatively regulates its own expression and the expression of DBP and BHLHE41/DEC2. Acts as a corepressor of RXR and the RXR-LXR heterodimers and represses the ligand-induced RXRA/B/G, NR1H3/LXRA, NR1H4 and VDR transactivation activity. Inhibits HNF1A-mediated transactivation of CYP1A2, CYP2E1 and CYP3A11. This Mus musculus (Mouse) protein is Class E basic helix-loop-helix protein 41 (Bhlhe41).